Here is a 348-residue protein sequence, read N- to C-terminus: Heat-inducible transcription repressor HrcA (348 aa).

It belongs to the HrcA family.

Negative regulator of class I heat shock genes (grpE-dnaK-dnaJ and groELS operons). Prevents heat-shock induction of these operons. In Lacticaseibacillus casei (strain BL23) (Lactobacillus casei), this protein is Heat-inducible transcription repressor HrcA.